Consider the following 631-residue polypeptide: Arginine--tRNA ligase (631 aa).

A 'HIGH' region motif is present at residues 132–142 (PNIAKPLHVGH).

This sequence belongs to the class-I aminoacyl-tRNA synthetase family.

It localises to the cytoplasm. It catalyses the reaction tRNA(Arg) + L-arginine + ATP = L-arginyl-tRNA(Arg) + AMP + diphosphate. In Halobacterium salinarum (strain ATCC 700922 / JCM 11081 / NRC-1) (Halobacterium halobium), this protein is Arginine--tRNA ligase.